The sequence spans 85 residues: Sec-independent protein translocase protein TatA (85 aa).

Residues 7–27 traverse the membrane as a helical segment; sequence VFGSLGWTEILLILFIALLLF. Positions 50–85 are disordered; it reads LTGESDDSSQQISQEQERSVPKEETKTSKSKKSKSA. Over residues 64 to 76 the composition is skewed to basic and acidic residues; it reads EQERSVPKEETKT.

It belongs to the TatA/E family. Forms a complex with TatC.

It localises to the cell inner membrane. In terms of biological role, part of the twin-arginine translocation (Tat) system that transports large folded proteins containing a characteristic twin-arginine motif in their signal peptide across membranes. TatA could form the protein-conducting channel of the Tat system. The protein is Sec-independent protein translocase protein TatA of Leptospira interrogans serogroup Icterohaemorrhagiae serovar Lai (strain 56601).